Reading from the N-terminus, the 102-residue chain is Ferredoxin (102 aa).

2 consecutive 4Fe-4S ferredoxin-type domains span residues 45 to 73 (VSVNINRYKCGYCGACVGVCPKGALELVE) and 74 to 102 (TWIEVDESTCIKCGICDRICPVGAIEVMK). Residues cysteine 54, cysteine 57, cysteine 60, cysteine 64, cysteine 83, cysteine 86, cysteine 89, and cysteine 93 each contribute to the [4Fe-4S] cluster site.

It depends on [4Fe-4S] cluster as a cofactor.

It participates in membrane lipid metabolism; glycerophospholipid metabolism. Functionally, ferredoxin that is the specific electron donor for the geranylgeranyl reductase GGR involved in the biosynthesis of archaeal membrane lipids. The polypeptide is Ferredoxin (Methanosarcina acetivorans (strain ATCC 35395 / DSM 2834 / JCM 12185 / C2A)).